We begin with the raw amino-acid sequence, 301 residues long: Glucose-1-phosphate adenylyltransferase large subunit (301 aa).

It belongs to the bacterial/plant glucose-1-phosphate adenylyltransferase family. Heterotetramer.

The protein localises to the plastid. The protein resides in the chloroplast. Its subcellular location is the amyloplast. It catalyses the reaction alpha-D-glucose 1-phosphate + ATP + H(+) = ADP-alpha-D-glucose + diphosphate. Its pathway is glycan biosynthesis; starch biosynthesis. Insensitive to 3'phosphoglycerate and orthophosphate. This protein plays a role in synthesis of starch. It catalyzes the synthesis of the activated glycosyl donor, ADP-glucose from Glc-1-P and ATP. This chain is Glucose-1-phosphate adenylyltransferase large subunit (AGA.1), found in Triticum aestivum (Wheat).